The sequence spans 217 residues: Casparian strip membrane protein 6 (217 aa).

Over 1–57 the chain is Cytoplasmic; sequence MEEAKHIEAVEAKQIEAEEAQRIKAGEAKQIEAGETSRSSRKVITFEPKLVINKGIS. A helical transmembrane segment spans residues 58 to 78; that stretch reads VLGFVLRLFAVFGTIGSALAM. Topologically, residues 79–103 are extracellular; the sequence is GTTHESVVSLSQLVLLKVKYSDLPT. Residues 104–124 traverse the membrane as a helical segment; it reads LMFFVVANAIAGGYLVLSLPV. At 125–138 the chain is on the cytoplasmic side; the sequence is SIFHIFSTKAKTSR. The helical transmembrane segment at 139–159 threads the bilayer; it reads IILLVIDTVMLALVSSGASAA. Topologically, residues 160–191 are extracellular; it reads TATVYLAHEGNTTANWPPICQQFDGFCERISG. Residue Asn170 is glycosylated (N-linked (GlcNAc...) asparagine). Residues 192–212 traverse the membrane as a helical segment; the sequence is SLIGSFCAVILLMLIVINSAI. The Cytoplasmic segment spans residues 213–217; the sequence is SLSRH.

This sequence belongs to the Casparian strip membrane proteins (CASP) family. Homodimer and heterodimers.

It localises to the cell membrane. Its function is as follows. Regulates membrane-cell wall junctions and localized cell wall deposition. Required for establishment of the Casparian strip membrane domain (CSD) and the subsequent formation of Casparian strips, a cell wall modification of the root endodermis that determines an apoplastic barrier between the intraorganismal apoplasm and the extraorganismal apoplasm and prevents lateral diffusion. This chain is Casparian strip membrane protein 6, found in Arabidopsis lyrata subsp. lyrata (Lyre-leaved rock-cress).